The primary structure comprises 102 residues: Integration host factor subunit alpha (102 aa).

Residues 49-71 (FGNFQLRTKPQRPGRNPKTGEEI) are disordered.

It belongs to the bacterial histone-like protein family. Heterodimer of an alpha and a beta chain.

Its function is as follows. This protein is one of the two subunits of integration host factor, a specific DNA-binding protein that functions in genetic recombination as well as in transcriptional and translational control. The chain is Integration host factor subunit alpha from Nitrosomonas eutropha (strain DSM 101675 / C91 / Nm57).